Reading from the N-terminus, the 435-residue chain is Adenylosuccinate synthetase (435 aa).

Residues 11–17 and 39–41 contribute to the GTP site; these read GDEGKGK and GHT. The active-site Proton acceptor is Asp12. Residues Asp12 and Gly39 each contribute to the Mg(2+) site. Residues 12 to 15, 37 to 40, Thr128, Arg142, Gln223, Thr238, and Arg302 each bind IMP; these read DEGK and NAGH. The Proton donor role is filled by His40. Residue 298–304 participates in substrate binding; that stretch reads SVTGRPR. Residues Arg304, 330-332, and 412-414 each bind GTP; these read KLD and STG.

It belongs to the adenylosuccinate synthetase family. In terms of assembly, homodimer. The cofactor is Mg(2+).

Its subcellular location is the cytoplasm. The catalysed reaction is IMP + L-aspartate + GTP = N(6)-(1,2-dicarboxyethyl)-AMP + GDP + phosphate + 2 H(+). It functions in the pathway purine metabolism; AMP biosynthesis via de novo pathway; AMP from IMP: step 1/2. Plays an important role in the de novo pathway of purine nucleotide biosynthesis. Catalyzes the first committed step in the biosynthesis of AMP from IMP. In Coxiella burnetii (strain RSA 331 / Henzerling II), this protein is Adenylosuccinate synthetase.